The primary structure comprises 284 residues: Tropomyosin-1 (284 aa).

2 disordered regions span residues 1 to 26 (MDAI…DTCE) and 96 to 124 (EEDL…DENN). Residues 1 to 276 (MDAIKKKMQA…YKSLADEMDS (276 aa)) are a coiled coil. Residues 12–26 (KLEKDNAMDKADTCE) show a composition bias toward basic and acidic residues. The span at 107 to 121 (GTAQQKLLEAQQSAD) shows a compositional bias: polar residues.

It belongs to the tropomyosin family. In terms of assembly, homodimer.

In terms of biological role, tropomyosin, in association with the troponin complex, plays a central role in the calcium dependent regulation of muscle contraction. The chain is Tropomyosin-1 from Bombyx mori (Silk moth).